The sequence spans 199 residues: MLDRETSRDDVAVQTIHVMQGAYVASDDPNIVYTTILGSCVCTCMCDPIARVGGINHFLLPYAGVTKVENLRYGYHAIEILINSLLKLGANRHRLEAKLFGGGSMTLQLGAVGPANAVFAQKYLRDESINCVARSLGGTRARKIRFHPTSGRVQQMFLTEIEQLPPESPRVRLRRGAGEVTYFDCDANSDPAAFGKEMR.

This sequence belongs to the CheD family.

It carries out the reaction L-glutaminyl-[protein] + H2O = L-glutamyl-[protein] + NH4(+). In terms of biological role, probably deamidates glutamine residues to glutamate on methyl-accepting chemotaxis receptors (MCPs), playing an important role in chemotaxis. The chain is Probable chemoreceptor glutamine deamidase CheD from Cereibacter sphaeroides (strain ATCC 17025 / ATH 2.4.3) (Rhodobacter sphaeroides).